A 337-amino-acid chain; its full sequence is Glutaredoxin-3 (337 aa).

Ala2 bears the N-acetylalanine mark. In terms of domain architecture, Thioredoxin spans 2 to 119 (AAGAAEAGEA…LTKKVQRHVS (118 aa)). Ser119 carries the phosphoserine modification. Glutaredoxin domains lie at 144–238 (HAAP…PKLE) and 239–337 (ERLK…KGEN). [2Fe-2S] cluster contacts are provided by Cys161 and Cys263.

As to quaternary structure, homodimer; the homodimer is independent of 2Fe-2S clusters. Heterotrimer; forms a heterotrimeric complex composed by two BOLA2 molecules and one GLRX3 molecule; linked by [2Fe-2S] clusters. Interacts (via N-terminus) with PRKCQ/PKC-theta. Interacts (via C-terminus) with CSRP3. Interacts with CSRP2.

It localises to the cytoplasm. The protein resides in the cytosol. The protein localises to the cell cortex. Its subcellular location is the myofibril. It is found in the sarcomere. It localises to the z line. Its function is as follows. Together with BOLA2, acts as a cytosolic iron-sulfur (Fe-S) cluster assembly factor that facilitates [2Fe-2S] cluster insertion into a subset of cytosolic proteins. Acts as a critical negative regulator of cardiac hypertrophy and a positive inotropic regulator. Required for hemoglobin maturation. Does not possess any thyoredoxin activity since it lacks the conserved motif that is essential for catalytic activity. The chain is Glutaredoxin-3 (Glrx3) from Mus musculus (Mouse).